Here is a 180-residue protein sequence, read N- to C-terminus: Large ribosomal subunit protein uL15 (180 aa).

Residues 1–62 (MKKERLEQAS…KTAGRGSKGQ (62 aa)) form a disordered region.

Belongs to the universal ribosomal protein uL15 family. In terms of assembly, part of the 50S ribosomal subunit.

Functionally, binds to the 23S rRNA. The chain is Large ribosomal subunit protein uL15 from Leptospira interrogans serogroup Icterohaemorrhagiae serovar copenhageni (strain Fiocruz L1-130).